We begin with the raw amino-acid sequence, 381 residues long: Cytochrome b (381 aa).

The next 4 membrane-spanning stretches (helical) occupy residues 33-53, 77-98, 113-133, and 178-198; these read FGSLLGICLIIQILTGLFLAM, WLLRNLHANGASMFFMCLFLHV, WNIGVILLLTVMATAFVGYVL, and FFAFHFILPFIIVAFAAVHLL. Residues His-83 and His-97 each contribute to the heme b site. Heme b contacts are provided by His-182 and His-196. His-201 contributes to the a ubiquinone binding site. 4 helical membrane passes run 226-246, 288-308, 320-340, and 347-367; these read IKDALGLIFLILSLLLLGLFS, LGGVLALLASILILLIIPLLH, IFQTLFWILTADLITLTWIGG, and FIIIGQLALMLYFLLILALMP.

The protein belongs to the cytochrome b family. In terms of assembly, the cytochrome bc1 complex contains 11 subunits: 3 respiratory subunits (MT-CYB, CYC1 and UQCRFS1), 2 core proteins (UQCRC1 and UQCRC2) and 6 low-molecular weight proteins (UQCRH/QCR6, UQCRB/QCR7, UQCRQ/QCR8, UQCR10/QCR9, UQCR11/QCR10 and a cleavage product of UQCRFS1). This cytochrome bc1 complex then forms a dimer. Heme b serves as cofactor.

It localises to the mitochondrion inner membrane. Functionally, component of the ubiquinol-cytochrome c reductase complex (complex III or cytochrome b-c1 complex) that is part of the mitochondrial respiratory chain. The b-c1 complex mediates electron transfer from ubiquinol to cytochrome c. Contributes to the generation of a proton gradient across the mitochondrial membrane that is then used for ATP synthesis. The polypeptide is Cytochrome b (MT-CYB) (Dasykaluta rosamondae (Little red marsupial mouse)).